The sequence spans 237 residues: AQSLSFSFTKFDPNQEDLIFQGTATSKLDSAGNPVSSSAGRVLYSAPLRLWEDSAVLTSFDPTIYIFTNYTSRIADGLAFIAPPDSVISYHGGFLGLFPNAAESGIAESNVVAVEFDTDYLNPDYGDPNYIHIGIDVNSIRSKVTASWDWQNGKIATAHISYNSVSKRLSVTTYYPGRGKPATSYDIELHTVLPEWVRVGLSASTGQNIERNTVHSWSFTSSLWTNVAKVGVASISG.

N-linked (GlcNAc...) asparagine glycosylation occurs at N69. I106 is subject to Blocked amino end (Ile). Mn(2+) is bound by residues E115 and D117. Ca(2+) is bound by residues D117, Y120, N122, and D127. D127 and H132 together coordinate Mn(2+).

Belongs to the leguminous lectin family. As to quaternary structure, tetramer of two alpha and two beta chains. Post-translationally, the N-terminus of alpha chain is blocked. The alpha and beta chains are produced by proteolytic processing, with probably the loss of intervening amino acid(s).

Functionally, D-mannose/D-glucose-binding lectin. Requires Ca(2+) and Mn(2+) ions for full activity. In Lablab purpureus (Hyacinth bean), this protein is Lectin.